Here is a 43-residue protein sequence, read N- to C-terminus: Protein PsbN (43 aa).

A helical transmembrane segment spans residues 7–27 (LSIGIAVVVIAVTGFSIYTAF).

This sequence belongs to the PsbN family.

It is found in the cellular thylakoid membrane. Functionally, may play a role in photosystem I and II biogenesis. The protein is Protein PsbN of Picosynechococcus sp. (strain ATCC 27264 / PCC 7002 / PR-6) (Agmenellum quadruplicatum).